Reading from the N-terminus, the 60-residue chain is Three-finger toxin MS3 (60 aa).

4 cysteine pairs are disulfide-bonded: cysteine 3–cysteine 22, cysteine 15–cysteine 39, cysteine 41–cysteine 52, and cysteine 53–cysteine 58.

Belongs to the three-finger toxin family. Short-chain subfamily. Type I alpha-neurotoxin sub-subfamily. Expressed by the venom gland.

The protein resides in the secreted. Functionally, produces peripheral paralysis by blocking neuromuscular transmission at the postsynaptic site. Binds to and inhibits the endogenous nicotinic acetylcholine receptors (nAChR) in human rhabdomyosarcoma TE 671 cell line with an IC(50) of 346 mM. This neurotoxin is lethal to mice by intraperitoneal injection and to zebrafish by injection at the back of the dorsolateral region. In Micrurus surinamensis (Surinam coral snake), this protein is Three-finger toxin MS3.